The following is a 365-amino-acid chain: tRNA(Met) cytidine acetate ligase (365 aa).

Residues 7-20, Gly96, Asn152, and Arg175 each bind ATP; that span reads IAEF…HKYL.

It belongs to the TmcAL family.

It is found in the cytoplasm. The enzyme catalyses cytidine(34) in elongator tRNA(Met) + acetate + ATP = N(4)-acetylcytidine(34) in elongator tRNA(Met) + AMP + diphosphate. Functionally, catalyzes the formation of N(4)-acetylcytidine (ac(4)C) at the wobble position of elongator tRNA(Met), using acetate and ATP as substrates. First activates an acetate ion to form acetyladenylate (Ac-AMP) and then transfers the acetyl group to tRNA to form ac(4)C34. The sequence is that of tRNA(Met) cytidine acetate ligase from Streptococcus pneumoniae serotype 4 (strain ATCC BAA-334 / TIGR4).